We begin with the raw amino-acid sequence, 279 residues long: Acyl-coenzyme A thioesterase MBLAC2 (279 aa).

S2 carries the post-translational modification N-acetylserine. Residues H83, H85, D87, H88, H170, D189, and H231 each coordinate Zn(2+). The S-palmitoyl cysteine moiety is linked to residue C254.

Belongs to the metallo-beta-lactamase superfamily. Glyoxalase II family. Zn(2+) is required as a cofactor. In terms of processing, palmitoylated on Cys-254 by ZDHHC20.

It localises to the endoplasmic reticulum membrane. Its subcellular location is the cell membrane. The catalysed reaction is hexadecanoyl-CoA + H2O = hexadecanoate + CoA + H(+). It catalyses the reaction dodecanoyl-CoA + H2O = dodecanoate + CoA + H(+). It carries out the reaction tetradecanoyl-CoA + H2O = tetradecanoate + CoA + H(+). The enzyme catalyses octadecanoyl-CoA + H2O = octadecanoate + CoA + H(+). The catalysed reaction is a beta-lactam + H2O = a substituted beta-amino acid. Functionally, acyl-CoA thioesterases are a group of enzymes that catalyze the hydrolysis of acyl-CoAs to the free fatty acid and coenzyme A (CoASH), providing the potential to regulate intracellular levels of acyl-CoAs, free fatty acids and CoASH. Has an acyl-CoA thioesterase activity towards the long chain fatty acyl-CoA thioester palmitoyl-CoA (hexadecanoyl-CoA; C16:0-CoA). Displays a substrate preference for fatty acyl-CoAs with chain-lengths C12-C18. The sequence is that of Acyl-coenzyme A thioesterase MBLAC2 (MBLAC2) from Bos taurus (Bovine).